Here is a 197-residue protein sequence, read N- to C-terminus: ATP-dependent Clp protease proteolytic subunit (197 aa).

Ser-98 (nucleophile) is an active-site residue. The active site involves His-123.

It belongs to the peptidase S14 family. As to quaternary structure, fourteen ClpP subunits assemble into 2 heptameric rings which stack back to back to give a disk-like structure with a central cavity, resembling the structure of eukaryotic proteasomes.

The protein localises to the cytoplasm. The catalysed reaction is Hydrolysis of proteins to small peptides in the presence of ATP and magnesium. alpha-casein is the usual test substrate. In the absence of ATP, only oligopeptides shorter than five residues are hydrolyzed (such as succinyl-Leu-Tyr-|-NHMec, and Leu-Tyr-Leu-|-Tyr-Trp, in which cleavage of the -Tyr-|-Leu- and -Tyr-|-Trp bonds also occurs).. Cleaves peptides in various proteins in a process that requires ATP hydrolysis. Has a chymotrypsin-like activity. Plays a major role in the degradation of misfolded proteins. The polypeptide is ATP-dependent Clp protease proteolytic subunit (Enterococcus faecalis (strain ATCC 700802 / V583)).